Reading from the N-terminus, the 399-residue chain is Coenzyme A biosynthesis bifunctional protein CoaBC (399 aa).

Residues 1–190 (MQSLAGKKIL…FAPKILVGKR (190 aa)) form a phosphopantothenoylcysteine decarboxylase region. The Proton donor role is filled by cysteine 159. A phosphopantothenate--cysteine ligase region spans residues 191–399 (VLITAGPTRE…AVMHLIHEQM (209 aa)). Residues aspartate 279, lysine 289, 307–310 (PDIV), phenylalanine 326, lysine 340, and lysine 344 contribute to the CTP site.

The protein in the N-terminal section; belongs to the HFCD (homo-oligomeric flavin containing Cys decarboxylase) superfamily. This sequence in the C-terminal section; belongs to the PPC synthetase family. It depends on Mg(2+) as a cofactor. The cofactor is FMN.

It carries out the reaction N-[(R)-4-phosphopantothenoyl]-L-cysteine + H(+) = (R)-4'-phosphopantetheine + CO2. The catalysed reaction is (R)-4'-phosphopantothenate + L-cysteine + CTP = N-[(R)-4-phosphopantothenoyl]-L-cysteine + CMP + diphosphate + H(+). The protein operates within cofactor biosynthesis; coenzyme A biosynthesis; CoA from (R)-pantothenate: step 2/5. It participates in cofactor biosynthesis; coenzyme A biosynthesis; CoA from (R)-pantothenate: step 3/5. Catalyzes two sequential steps in the biosynthesis of coenzyme A. In the first step cysteine is conjugated to 4'-phosphopantothenate to form 4-phosphopantothenoylcysteine. In the second step the latter compound is decarboxylated to form 4'-phosphopantotheine. The chain is Coenzyme A biosynthesis bifunctional protein CoaBC from Vibrio cholerae serotype O1 (strain ATCC 39315 / El Tor Inaba N16961).